A 278-amino-acid polypeptide reads, in one-letter code: Trehalose monomycolate transport factor A (278 aa).

Met1 is a topological domain (periplasmic). A helical transmembrane segment spans residues 2-22 (VPLWFTLSALCFVGAAVLLYV). The Cytoplasmic segment spans residues 23–278 (DIDRRRGLGR…NGREASHFQR (256 aa)). The tract at residues 200–278 (PPVPQNGSQA…NGREASHFQR (79 aa)) is disordered. Basic and acidic residues predominate over residues 269–278 (NGREASHFQR).

As to quaternary structure, monomer. Interacts (via N-terminus) with MmpL3; active trehalose monomycolate (TMM) biosynthesis is not required for the complex formation. Interacts with MSMEG_5308.

Its subcellular location is the cell inner membrane. The protein localises to the cell septum. The protein resides in the cell tip. Its function is as follows. Required for MmpL3-dependent trehalose monomycolate (TMM) transport to the cell wall. Required for growth and cell elongation. The sequence is that of Trehalose monomycolate transport factor A from Mycolicibacterium smegmatis (strain ATCC 700084 / mc(2)155) (Mycobacterium smegmatis).